A 274-amino-acid chain; its full sequence is Imidazole glycerol phosphate synthase subunit HisF (274 aa).

Active-site residues include Asp-11 and Asp-134.

The protein belongs to the HisA/HisF family. As to quaternary structure, heterodimer of HisH and HisF.

It is found in the cytoplasm. It catalyses the reaction 5-[(5-phospho-1-deoxy-D-ribulos-1-ylimino)methylamino]-1-(5-phospho-beta-D-ribosyl)imidazole-4-carboxamide + L-glutamine = D-erythro-1-(imidazol-4-yl)glycerol 3-phosphate + 5-amino-1-(5-phospho-beta-D-ribosyl)imidazole-4-carboxamide + L-glutamate + H(+). It functions in the pathway amino-acid biosynthesis; L-histidine biosynthesis; L-histidine from 5-phospho-alpha-D-ribose 1-diphosphate: step 5/9. In terms of biological role, IGPS catalyzes the conversion of PRFAR and glutamine to IGP, AICAR and glutamate. The HisF subunit catalyzes the cyclization activity that produces IGP and AICAR from PRFAR using the ammonia provided by the HisH subunit. The sequence is that of Imidazole glycerol phosphate synthase subunit HisF from Methanosphaera stadtmanae (strain ATCC 43021 / DSM 3091 / JCM 11832 / MCB-3).